The chain runs to 101 residues: CRISPR-associated endoribonuclease Cas2 (101 aa).

Aspartate 8 lines the Mg(2+) pocket.

This sequence belongs to the CRISPR-associated endoribonuclease Cas2 protein family. In terms of assembly, homodimer, forms a heterotetramer with a Cas1 homodimer. The cofactor is Mg(2+).

In terms of biological role, CRISPR (clustered regularly interspaced short palindromic repeat), is an adaptive immune system that provides protection against mobile genetic elements (viruses, transposable elements and conjugative plasmids). CRISPR clusters contain sequences complementary to antecedent mobile elements and target invading nucleic acids. CRISPR clusters are transcribed and processed into CRISPR RNA (crRNA). Functions as a ssRNA-specific endoribonuclease. Involved in the integration of spacer DNA into the CRISPR cassette. This is CRISPR-associated endoribonuclease Cas2 from Ligilactobacillus salivarius (strain UCC118) (Lactobacillus salivarius).